Consider the following 402-residue polypeptide: 26S proteasome regulatory subunit 8 (402 aa).

186 to 193 (GPPGTGKT) contributes to the ATP binding site.

This sequence belongs to the AAA ATPase family.

The protein localises to the cytoplasm. Its subcellular location is the nucleus. The 26S proteasome is involved in the ATP-dependent degradation of ubiquitinated proteins. The regulatory (or ATPase) complex confers ATP dependency and substrate specificity to the 26S complex. The protein is 26S proteasome regulatory subunit 8 of Manduca sexta (Tobacco hawkmoth).